The following is a 398-amino-acid chain: Cation channel sperm-associated protein 3 (398 aa).

Over 1–48 (MSQHRHQRHSRVISSSPVDTTSVGFCPTFKKFKRNDDECRAFVKRVIM) the chain is Cytoplasmic. Residues 49–71 (SRFFKIIMISTVTSNAFFMALWT) form a helical membrane-spanning segment. Over 72–80 (SYDIRYRLF) the chain is Extracellular. Residues 81–107 (RLLEFSEIFFVSICTSELSMKVYVDPI) traverse the membrane as a helical segment. Residue Asn108 is a topological domain, cytoplasmic. Residues 109–131 (YWKNGYNLLDVIIIIVMFLPYAL) form a helical membrane-spanning segment. At 132–143 (RQLMGKQFTYLY) the chain is on the extracellular side. The chain crosses the membrane as a helical span at residues 144-160 (IADGMQSLRILKLIGYS). Residues 161 to 168 (QGIRTLIT) are Cytoplasmic-facing. The helical transmembrane segment at 169 to 195 (AVGQTVYTVASVLLLLFLLMYIFAILG) threads the bilayer. Topologically, residues 196 to 216 (FCLFGSPDNGDHDNWGNLAAA) are extracellular. An intramembrane region (helical; Pore-forming) is located at residues 217 to 236 (FFTLFSLATVDGWTDLQKQL). Residues 237-242 (DNREFA) are Extracellular-facing. Residues 243–268 (LSRAFTIIFILLASFIFLNMFVGVMI) traverse the membrane as a helical segment. Residues 269 to 398 (MHTEDSIRKF…PQSLEKVDEK (130 aa)) lie on the Cytoplasmic side of the membrane.

It belongs to the cation channel sperm-associated (TC 1.A.1.19) family. Component of the CatSper complex or CatSpermasome composed of the core pore-forming members CATSPER1, CATSPER2, CATSPER3 and CATSPER4 as well as auxiliary members CATSPERB, CATSPERG, CATSPERD, CATSPERE, CATSPERZ, C2CD6/CATSPERT, TMEM249, TMEM262 and EFCAB9. HSPA1 may be an additional auxiliary complex member. The core complex members CATSPER1, CATSPER2, CATSPER3 and CATSPER4 form a heterotetrameric channel. The auxiliary CATSPERB, CATSPERG, CATSPERD and CATSPERE subunits form a pavilion-like structure over the pore which stabilizes the complex through interactions with CATSPER4, CATSPER3, CATSPER1 and CATSPER2 respectively. TMEM262/CATSPERH interacts with CATSPERB, further stabilizing the complex. C2CD6/CATSPERT interacts at least with CATSPERD and is required for targeting the CatSper complex in the flagellar membrane. Testis-specific.

It localises to the cell projection. It is found in the cilium. Its subcellular location is the flagellum membrane. It catalyses the reaction Ca(2+)(in) = Ca(2+)(out). Its activity is regulated as follows. The CatSper calcium channel is indirectly activated by extracellular progesterone and prostaglandins following the sequence: progesterone &gt; PGF1-alpha = PGE1 &gt; PGA1 &gt; PGE2 &gt;&gt; PGD2. The CatSper calcium channel is directly inhibited by endocannabinoid 2-arachidonoylglycerol (2AG). Indirect activation by progesterone takes place via the following mechanism: progesterone binds and activates the acylglycerol lipase ABHD2, which in turn mediates hydrolysis of 2AG inhibitor, relieving inhibition of the CatSper channel. The primary effect of progesterone activation is to shift voltage dependence towards more physiological, negative membrane potentials; it is not mediated by metabotropic receptors and second messengers. Sperm capacitation enhances the effect of progesterone by providing additional negative shift. Also activated by the elevation of intracellular pH. Its function is as follows. Pore-forming subunit of the CatSper complex, a sperm-specific voltage-gated calcium channel that plays a central role in calcium-dependent physiological responses essential for successful fertilization, such as sperm hyperactivation, acrosome reaction and chemotaxis towards the oocyte. The protein is Cation channel sperm-associated protein 3 (CATSPER3) of Homo sapiens (Human).